We begin with the raw amino-acid sequence, 610 residues long: UvrABC system protein C (610 aa).

One can recognise a GIY-YIG domain in the interval 16–94 (SQPGVYRMYD…IKLYQPRYNV (79 aa)). Residues 204 to 239 (QQVLTQLISRMEEASRLLHFEDAARIRDQIQAVRRV) enclose the UVR domain.

This sequence belongs to the UvrC family. In terms of assembly, interacts with UvrB in an incision complex.

It is found in the cytoplasm. In terms of biological role, the UvrABC repair system catalyzes the recognition and processing of DNA lesions. UvrC both incises the 5' and 3' sides of the lesion. The N-terminal half is responsible for the 3' incision and the C-terminal half is responsible for the 5' incision. The chain is UvrABC system protein C from Yersinia enterocolitica serotype O:8 / biotype 1B (strain NCTC 13174 / 8081).